Here is a 180-residue protein sequence, read N- to C-terminus: Trafficking protein particle complex subunit 3 (180 aa).

The S-palmitoyl cysteine moiety is linked to residue cysteine 68.

This sequence belongs to the TRAPP small subunits family. BET3 subfamily. As to quaternary structure, homodimer. Component of the multisubunit transport protein particle (TRAPP) complex, which includes at least TRAPPC2, TRAPPC2L, TRAPPC3, TRAPPC3L, TRAPPC4, TRAPPC5, TRAPPC8, TRAPPC9, TRAPPC10, TRAPPC11 and TRAPPC12. Heterodimer with TRAPPC6A. The heterodimer TRAPPC3-TRAPPC6A interacts with TRAPPC2L. Heterodimer with TRAPPC6b. The heterodimer TRAPPC6B-TRAPPC3 interacts with TRAPPC1 likely providing a core for TRAPP complex formation. In terms of tissue distribution, widely expressed. Expressed in lung, heart, liver, spleen, brain and kidney.

Its subcellular location is the golgi apparatus. It is found in the cis-Golgi network. The protein localises to the endoplasmic reticulum. Functionally, may play a role in vesicular transport from endoplasmic reticulum to Golgi. The protein is Trafficking protein particle complex subunit 3 of Mus musculus (Mouse).